The following is a 757-amino-acid chain: Cell cycle progression protein 1 (757 aa).

Topologically, residues 1 to 217 (MSENSSDSDS…KRQFSSGLNK (217 aa)) are cytoplasmic. The interaction with MCF2L and SRC stretch occupies residues 1–308 (MSENSSDSDS…QKTNLATENQ (308 aa)). Residues 152 to 207 (VFSSQPSDDESSSDETSNQPSPAFRRRRARKKTVSASESEDRLVAEQETEPSKELS) are disordered. Residues 175-184 (FRRRRARKKT) are compositionally biased toward basic residues. Serine 186 is subject to Phosphoserine. Over residues 190 to 207 (SEDRLVAEQETEPSKELS) the composition is skewed to basic and acidic residues. Residues 218–238 (CVILALVIAISMGFGHFYGTI) traverse the membrane as a helical; Signal-anchor for type II membrane protein segment. The Lumenal portion of the chain corresponds to 239-757 (QIQKRQQLVR…YIKPCHYSSL (519 aa)). Coiled-coil stretches lie at residues 248-272 (RKIH…QESF) and 306-450 (ENQY…LWER). The span at 458–468 (QNGKQGTDGKK) shows a compositional bias: basic and acidic residues. The interval 458–483 (QNGKQGTDGKKKGGRGSHRAKNKSKE) is disordered. The segment covering 469-479 (KGGRGSHRAKN) has biased composition (basic residues). Residues 504–530 (VRHHKEKIKQAKEAVKENLKKFSDSVK) adopt a coiled-coil conformation.

It belongs to the CCPG1 family. In terms of assembly, interacts with MCF2L. May interact with MCF2, ARHGEF1, BCR, VAV1 and FGD1, but not with TIAM1. Interacts with GTP-bound CDC42 and SRC.

The protein resides in the cytoplasmic granule membrane. Its function is as follows. Acts as an assembly platform for Rho protein signaling complexes. Limits guanine nucleotide exchange activity of MCF2L toward RHOA, which results in an inhibition of both its transcriptional activation ability and its transforming activity. Does not inhibit activity of MCF2L toward CDC42, or activity of MCF2 toward either RHOA or CDC42. May be involved in cell cycle regulation. The chain is Cell cycle progression protein 1 (CCPG1) from Homo sapiens (Human).